Reading from the N-terminus, the 328-residue chain is Gonadotropin-releasing hormone receptor (328 aa).

Residues 1–38 (MANGDSPDQNENHCSAINSSILLTPGSLPTLTLSGKIR) lie on the Extracellular side of the membrane. An N-linked (GlcNAc...) asparagine glycan is attached at Asn18. A helical transmembrane segment spans residues 39-58 (VTVTFFLFLLSTIFNTSFLL). The Cytoplasmic portion of the chain corresponds to 59-77 (KLQNWTQRKEKRKKLSKMK). Residues 78 to 97 (VLLKHLTLANLLETLIVMPL) traverse the membrane as a helical segment. At 98–115 (DGMWNITVQWYAGELLCK) the chain is on the extracellular side. Residue Asn102 is glycosylated (N-linked (GlcNAc...) asparagine). Cys114 and Cys196 are oxidised to a cystine. Residues 116-137 (VLSYLKLFSMYAPAFMMVVISL) traverse the membrane as a helical segment. Over 138–164 (DRSLAITRPLAVKSNSKLGQFMIGLAW) the chain is Cytoplasmic. The chain crosses the membrane as a helical span at residues 165–184 (LLSSIFAGPQLYIFGMIHLA). At 185–212 (DDSGQTEGFSQCVTHCSFPQWWHQAFYN) the chain is on the extracellular side. A helical membrane pass occupies residues 213-232 (FFTFSCLFIIPLLIMLICNA). Topologically, residues 233–281 (KIIFTLTRVLHQDPHKLQLNQSKNNIPQARLRTLKMTVAFATSFTVCWT) are cytoplasmic. A helical membrane pass occupies residues 282-300 (PYYVLGIWYWFDPDMVNRV). The Extracellular segment spans residues 301–306 (SDPVNH). The chain crosses the membrane as a helical span at residues 307–326 (FFFLFAFLNPCFDPLIYGYF). Over 327 to 328 (SL) the chain is Cytoplasmic.

It belongs to the G-protein coupled receptor 1 family.

The protein localises to the cell membrane. Its function is as follows. Receptor for gonadotropin releasing hormone (GnRH) that mediates the action of GnRH to stimulate the secretion of the gonadotropic hormones luteinizing hormone (LH) and follicle-stimulating hormone (FSH). This receptor mediates its action by association with G-proteins that activate a phosphatidylinositol-calcium second messenger system. The sequence is that of Gonadotropin-releasing hormone receptor (GNRHR) from Ovis aries (Sheep).